The chain runs to 678 residues: ABC transporter F family member 2 (678 aa).

ABC transporter domains lie at 84–342 and 411–626; these read VRLE…EAQY and VTVK…AREL. ATP contacts are provided by residues 116-123 and 443-450; these read GVNGAGKT and GPNGCGKS. A disordered region spans residues 630–678; the sequence is AELEEKAPKVKAKSKMSKAEREARKKQKMKAFQASKKKSKSSKNAKRWN. Residues 653–678 show a composition bias toward basic residues; the sequence is RKKQKMKAFQASKKKSKSSKNAKRWN.

This sequence belongs to the ABC transporter superfamily. ABCF family. EF3 (TC 3.A.1.121) subfamily.

The chain is ABC transporter F family member 2 (ABCF2) from Arabidopsis thaliana (Mouse-ear cress).